Consider the following 125-residue polypeptide: Secretion system apparatus protein SsaO (125 aa).

The polypeptide is Secretion system apparatus protein SsaO (ssaO) (Salmonella typhimurium (strain LT2 / SGSC1412 / ATCC 700720)).